The chain runs to 351 residues: Alternative oxidase, mitochondrial (351 aa).

Residues 147 to 167 (LTRFIFLESVAGVPGMVGGML) form a helical membrane-spanning segment. Fe cation-binding residues include E154, E193, and H196. Residues 212-232 (LMVLGAQGVFFNGFFLSYLMS) traverse the membrane as a helical segment. Fe cation-binding residues include E244, E245, E299, and H302. Residues 322–351 (AAKYKDPTKAHPNKGIADLKPTGWEREEVI) are disordered.

It belongs to the alternative oxidase family. Fe cation serves as cofactor.

The protein localises to the mitochondrion inner membrane. Its function is as follows. Catalyzes cyanide-resistant oxygen consumption. May increase respiration when the cytochrome respiratory pathway is restricted, or in response to low temperatures. This is Alternative oxidase, mitochondrial (aox1) from Aspergillus niger.